The following is a 171-amino-acid chain: Myosin regulatory light chain 12A (171 aa).

Thr18 carries the post-translational modification Phosphothreonine; by MLCK. Ser19 carries the post-translational modification Phosphoserine; by MLCK. EF-hand domains follow at residues 28-63 (SQIQEFKEAFNMIDQNRDGFIDKEDLHDMLASLGKN), 97-132 (DPEDVIRNAFACFDEEATGTIQEDYLRELLTTMGDR), and 133-168 (FTDEEVDELYREAPIDKKGNFNYIEFTRILKHGAKD). Ca(2+)-binding residues include Asp41, Asn43, Asp45, and Asp52.

In terms of assembly, myosin is a hexamer of 2 heavy chains and 4 light chains. Phosphorylation increases the actin-activated myosin ATPase activity and thereby regulates the contractile activity. It is required to generate the driving force in the migration of the cells but not necessary for localization of myosin-2 at the leading edge.

Its function is as follows. Myosin regulatory subunit that plays an important role in regulation of both smooth muscle and nonmuscle cell contractile activity via its phosphorylation. Implicated in cytokinesis, receptor capping, and cell locomotion. The sequence is that of Myosin regulatory light chain 12A (MYL12A) from Homo sapiens (Human).